Here is a 690-residue protein sequence, read N- to C-terminus: UvrABC system protein C (690 aa).

Residues 1 to 60 (MTTDSSDPAKPAGPGQPPGSGADTRPGGLATGQDVDPATIETDEDDEARLPDVPDEPTDA) are disordered. The segment covering 41 to 58 (ETDEDDEARLPDVPDEPT) has biased composition (acidic residues). Positions 82-160 (TSPGVYRMMN…IKQLRPRFNV (79 aa)) constitute a GIY-YIG domain. One can recognise a UVR domain in the interval 270–305 (RAVKEELAREMEKASGDLAFERAALYRDRLAALSAI).

This sequence belongs to the UvrC family. In terms of assembly, interacts with UvrB in an incision complex.

It localises to the cytoplasm. In terms of biological role, the UvrABC repair system catalyzes the recognition and processing of DNA lesions. UvrC both incises the 5' and 3' sides of the lesion. The N-terminal half is responsible for the 3' incision and the C-terminal half is responsible for the 5' incision. This chain is UvrABC system protein C, found in Nitrobacter hamburgensis (strain DSM 10229 / NCIMB 13809 / X14).